Consider the following 463-residue polypeptide: 23S rRNA (uracil(1939)-C(5))-methyltransferase RlmD (463 aa).

The TRAM domain maps to 6 to 76 (KSRKPQQPEY…KRLEEAEMVE (71 aa)). 4 residues coordinate [4Fe-4S] cluster: Cys90, Cys96, Cys99, and Cys178. Gln288, Phe317, Asn322, Glu341, Asp368, and Asp389 together coordinate S-adenosyl-L-methionine. The Nucleophile role is filled by Cys415.

The protein belongs to the class I-like SAM-binding methyltransferase superfamily. RNA M5U methyltransferase family. RlmD subfamily.

It catalyses the reaction uridine(1939) in 23S rRNA + S-adenosyl-L-methionine = 5-methyluridine(1939) in 23S rRNA + S-adenosyl-L-homocysteine + H(+). Functionally, catalyzes the formation of 5-methyl-uridine at position 1939 (m5U1939) in 23S rRNA. The chain is 23S rRNA (uracil(1939)-C(5))-methyltransferase RlmD from Acinetobacter baumannii (strain AYE).